Here is a 272-residue protein sequence, read N- to C-terminus: 4-hydroxy-tetrahydrodipicolinate reductase (272 aa).

G12–M17 contributes to the NAD(+) binding site. K39 provides a ligand contact to NADP(+). Residues G102 to T104 and S126 to Y129 each bind NAD(+). The active-site Proton donor/acceptor is the H159. H160 contributes to the (S)-2,3,4,5-tetrahydrodipicolinate binding site. K163 serves as the catalytic Proton donor. G169 to T170 serves as a coordination point for (S)-2,3,4,5-tetrahydrodipicolinate.

The protein belongs to the DapB family. As to quaternary structure, homotetramer.

The protein localises to the cytoplasm. The catalysed reaction is (S)-2,3,4,5-tetrahydrodipicolinate + NAD(+) + H2O = (2S,4S)-4-hydroxy-2,3,4,5-tetrahydrodipicolinate + NADH + H(+). It catalyses the reaction (S)-2,3,4,5-tetrahydrodipicolinate + NADP(+) + H2O = (2S,4S)-4-hydroxy-2,3,4,5-tetrahydrodipicolinate + NADPH + H(+). Its pathway is amino-acid biosynthesis; L-lysine biosynthesis via DAP pathway; (S)-tetrahydrodipicolinate from L-aspartate: step 4/4. Functionally, catalyzes the conversion of 4-hydroxy-tetrahydrodipicolinate (HTPA) to tetrahydrodipicolinate. The protein is 4-hydroxy-tetrahydrodipicolinate reductase of Buchnera aphidicola subsp. Baizongia pistaciae (strain Bp).